Here is a 118-residue protein sequence, read N- to C-terminus: ATP-dependent Clp protease adapter protein ClpS (118 aa).

The interval 1–24 (MNGSSNSGSPGGGQTGDDDGTGFD) is disordered.

It belongs to the ClpS family. In terms of assembly, binds to the N-terminal domain of the chaperone ClpA.

In terms of biological role, involved in the modulation of the specificity of the ClpAP-mediated ATP-dependent protein degradation. This is ATP-dependent Clp protease adapter protein ClpS from Hyphomonas neptunium (strain ATCC 15444).